The primary structure comprises 228 residues: Phosphoglycolate phosphatase 1 (228 aa).

The active-site Nucleophile is the Asp8. 2 residues coordinate Mg(2+): Asp8 and Asp10. A substrate-binding site is contributed by Lys149. Positions 172 and 176 each coordinate Mg(2+).

The protein belongs to the archaeal SPP-like hydrolase family. Requires Mg(2+) as cofactor.

It carries out the reaction 2-phosphoglycolate + H2O = glycolate + phosphate. Catalyzes the dephosphorylation of 2-phosphoglycolate. This is Phosphoglycolate phosphatase 1 from Saccharolobus solfataricus (strain ATCC 35092 / DSM 1617 / JCM 11322 / P2) (Sulfolobus solfataricus).